Reading from the N-terminus, the 847-residue chain is Vacuolar membrane protease (847 aa).

Residues 1 to 17 (MQFGKSLLKHVYTRTFK) lie on the Cytoplasmic side of the membrane. Residues 18–38 (SSLTCSIFAFTLLMIFFVLDW) form a helical membrane-spanning segment. Residues 39–348 (KRMNVYPRLD…GSYWQINLNL (310 aa)) are Vacuolar-facing. Residues H146 and D158 each coordinate Zn(2+). Residue E190 is the Proton acceptor of the active site. Position 191 (E191) interacts with Zn(2+). N208 carries N-linked (GlcNAc...) asparagine glycosylation. Position 216 (E216) interacts with Zn(2+). N274 is a glycosylation site (N-linked (GlcNAc...) asparagine). Zn(2+) is bound at residue H291. Residues 349 to 369 (HLFLNVVFLIACPAILFMCLF) form a helical membrane-spanning segment. At 370 to 381 (RFPSLYAQLKKP) the chain is on the cytoplasmic side. The chain crosses the membrane as a helical span at residues 382–402 (CYLICFTLSSLFVLIFDYVVV). The Vacuolar portion of the chain corresponds to 403-415 (QSLTKLNPYVIHS). The helical transmembrane segment at 416–436 (SPDAVLAFFFLTNLLGLVYSF) threads the bilayer. Residues 437-454 (RYVATHSRMSNEELSCIE) are Cytoplasmic-facing. Residues 455-475 (IVLIWYVSMFWYISLLIATLT) traverse the membrane as a helical segment. The Vacuolar segment spans residues 476–482 (SIVRGLG). The helical transmembrane segment at 483 to 503 (SLYFVNFGFFCSFFCCILTLI) threads the bilayer. The Cytoplasmic portion of the chain corresponds to 504 to 560 (RVRYFVDRMVTINRPANPEQMPLVQSTSGNAYGTSRYPQHRLKAVVSKSASVKLNDN). Residues 561–581 (LWSVLFFSCLVPLPLFTCYNL) traverse the membrane as a helical segment. The Vacuolar segment spans residues 582 to 605 (LSEVFIPAVHQSLIDGPYSNTCYK). A helical membrane pass occupies residues 606–626 (FAVILVFMAIINSSPFVFRAL). Over 627–630 (SKKS) the chain is Cytoplasmic. A helical transmembrane segment spans residues 631–651 (SAILLMLWVSLLFNILRAEPF). Topologically, residues 652–847 (NEKAPIKFRV…LLKMSKTHVM (196 aa)) are vacuolar. N726, N734, N800, and N834 each carry an N-linked (GlcNAc...) asparagine glycan.

This sequence belongs to the peptidase M28 family. Requires Zn(2+) as cofactor.

The protein localises to the vacuole membrane. Functionally, may be involved in vacuolar sorting and osmoregulation. The sequence is that of Vacuolar membrane protease from Schizosaccharomyces japonicus (strain yFS275 / FY16936) (Fission yeast).